Consider the following 614-residue polypeptide: Vitamin B12 transporter BtuB (614 aa).

An N-terminal signal peptide occupies residues 1–20; sequence MIKKASLLTACSVTAFSAWA. Residues 26-33 carry the TonB box motif; that stretch reads DTLVVTAN. The TBDR plug domain occupies 38–152; the sequence is PRSTVLAPTT…IGGVVNIITT (115 aa). Cyanocob(III)alamin contacts are provided by residues Leu-83, Ser-85, Asn-92, and 110-111; that span reads GS. The region spanning 155–614 is the TBDR beta-barrel domain; that stretch reads EPGTEISAGW…EYTLSGSYTF (460 aa). Transmembrane regions (beta stranded) follow at residues 158 to 165, 169 to 178, and 184 to 195; these read TEISAGWG, YQNYDVSTQQ, and TRVTLLGDYAHT. Residues Asp-199, Gln-211, Asp-213, and Asp-215 each coordinate Ca(2+). The next 2 beta stranded transmembrane spans lie at 217–227 and 232–248; these read FLSKTLYGALE and DAWSGFVRGYGYDNRTN. 2 residues coordinate Ca(2+): Tyr-249 and Asp-250. Ala-251 lines the cyanocob(III)alamin pocket. A Ca(2+)-binding site is contributed by Asp-261. 14 consecutive transmembrane segments (beta stranded) span residues 263 to 277, 279 to 296, 309 to 325, 328 to 337, 353 to 369, 371 to 381, 385 to 400, 403 to 417, 434 to 443, 449 to 458, 473 to 490, 494 to 509, 517 to 529, and 535 to 550; these read RKLYSQSWDAGLRYN, ELIKSQLITSYSHSKDYN, TLDEMKQYTVQWANNII, HGNVGAGVDW, YDQRNTGIYLTGLQQVG, FTFEGAARSDD, FGRHGTWQTSAGWEFI, YRFIASYGTSYKAPN, KSKQWEGAFE, VNWRISGYRN, YYNEGKARIKGVEATANF, PLTHTVSYDYVDARNA, RRAKQQVKYQLDW, and DWGITYQYLGTRYDKD. Residue Thr-309 participates in cyanocob(III)alamin binding. Arg-517 is a binding site for cyanocob(III)alamin. Tyr-551 contacts cyanocob(III)alamin. The next 3 beta stranded transmembrane spans lie at 558 to 572, 585 to 596, and 602 to 614; these read TVKMGGVSLWDLAVA, IANLFDKDYETV, and AGREYTLSGSYTF. The TonB C-terminal box motif lies at 597 to 614; sequence YGYQTAGREYTLSGSYTF.

It belongs to the TonB-dependent receptor family. BtuB (TC 1.B.14.3.1) subfamily.

It localises to the cell outer membrane. Functionally, involved in the active translocation of vitamin B12 (cyanocobalamin) across the outer membrane to the periplasmic space. It derives its energy for transport by interacting with the trans-periplasmic membrane protein TonB. This Escherichia coli O157:H7 protein is Vitamin B12 transporter BtuB.